A 340-amino-acid chain; its full sequence is DNA-directed RNA polymerase subunit alpha (340 aa).

Residues 1 to 236 (MLSLSKNWNT…EQLQLFISFE (236 aa)) are alpha N-terminal domain (alpha-NTD). Residues 251-340 (FSPYLLKRVD…LSKRYEDSYN (90 aa)) are alpha C-terminal domain (alpha-CTD).

The protein belongs to the RNA polymerase alpha chain family. Homodimer. The RNAP catalytic core consists of 2 alpha, 1 beta, 1 beta' and 1 omega subunit. When a sigma factor is associated with the core the holoenzyme is formed, which can initiate transcription.

The catalysed reaction is RNA(n) + a ribonucleoside 5'-triphosphate = RNA(n+1) + diphosphate. DNA-dependent RNA polymerase catalyzes the transcription of DNA into RNA using the four ribonucleoside triphosphates as substrates. The polypeptide is DNA-directed RNA polymerase subunit alpha (Rickettsia akari (strain Hartford)).